The primary structure comprises 72 residues: Mitotic-spindle organizing protein 1 (72 aa).

It belongs to the MOZART1 family. In terms of assembly, part of the gamma-tubulin complex.

It is found in the cytoplasm. The protein resides in the cytoskeleton. Its subcellular location is the microtubule organizing center. It localises to the centrosome. The protein localises to the spindle. Its function is as follows. Required for gamma-tubulin complex recruitment to the centrosome. In Xenopus laevis (African clawed frog), this protein is Mitotic-spindle organizing protein 1 (mzt1).